The sequence spans 516 residues: Glycosyltransferase-like protein gnt15 (516 aa).

The Cytoplasmic portion of the chain corresponds to 1-24; the sequence is MSNFYNNNPRRNTFRLTERIKKKP. The helical; Signal-anchor for type II membrane protein transmembrane segment at 25–45 threads the bilayer; the sequence is YQTLIVFILIFLFLYVFGPFG. At 46 to 516 the chain is on the extracellular side; it reads EKKSNNNNNN…NDNCLTREHW (471 aa). Asn-152 carries N-linked (GlcNAc...) asparagine glycosylation. A disordered region spans residues 199-250; sequence DTSNNNNNNNNNNNNNNNNNNNNNNNNNNNNNNNENNDNDNGNNNNNNDNEK. Residues 202 to 246 show a composition bias toward low complexity; that stretch reads NNNNNNNNNNNNNNNNNNNNNNNNNNNNNNNENNDNDNGNNNNNN. 2 N-linked (GlcNAc...) asparagine glycosylation sites follow: Asn-386 and Asn-412.

It belongs to the glycosyltransferase 8 family. Highly divergent.

It localises to the membrane. May have a role in modulating cell adhesion and glycosylation. Essential for development. This is Glycosyltransferase-like protein gnt15 (gnt15) from Dictyostelium discoideum (Social amoeba).